The following is a 462-amino-acid chain: NAD-capped RNA hydrolase NUDT12 (462 aa).

ANK repeat units follow at residues 11-40, 45-74, and 78-98; these read EIVT…SLLN, NGWT…DRSI, and SRQT…ANLL. Lysine 185 is modified (N6-succinyllysine). Residues cysteine 284 and cysteine 287 each coordinate Zn(2+). Lysine 292 is subject to N6-succinyllysine. Zn(2+)-binding residues include cysteine 302 and cysteine 307. Residues tyrosine 318, 354–356, glutamate 370, glutamate 374, and glutamate 415 contribute to the substrate site; that span reads AGF. A Nudix hydrolase domain is found at 319-453; sequence PRVDPVVIMQ…SRAIAHQLIK (135 aa). Mg(2+)-binding residues include alanine 354, glutamate 370, glutamate 374, and glutamate 415. The Nudix box motif lies at 355-376; sequence GFIEPGETIEDAVRREVEEESG. Positions 460–462 match the Microbody targeting signal motif; that stretch reads PNL.

This sequence belongs to the Nudix hydrolase family. NudC subfamily. Homodimer. Homodimerization is essential for its catalytic activity and protein stability. Interacts (via ANK repeats) with BLMH. Mg(2+) serves as cofactor. Zn(2+) is required as a cofactor.

The protein localises to the cytoplasm. Its subcellular location is the peroxisome. The protein resides in the cytoplasmic granule. It carries out the reaction a 5'-end NAD(+)-phospho-ribonucleoside in mRNA + H2O = a 5'-end phospho-adenosine-phospho-ribonucleoside in mRNA + beta-nicotinamide D-ribonucleotide + 2 H(+). It catalyses the reaction NAD(+) + H2O = beta-nicotinamide D-ribonucleotide + AMP + 2 H(+). The catalysed reaction is NADH + H2O = reduced beta-nicotinamide D-ribonucleotide + AMP + 2 H(+). The enzyme catalyses NADPH + H2O = reduced beta-nicotinamide D-ribonucleotide + adenosine 2',5'-bisphosphate + 2 H(+). Functionally, mRNA decapping enzyme that specifically removes the nicotinamide adenine dinucleotide (NAD) cap from a subset of mRNAs by hydrolyzing the diphosphate linkage to produce nicotinamide mononucleotide (NMN) and 5' monophosphate mRNA. The NAD-cap is present at the 5'-end of some RNAs; in contrast to the canonical N7 methylguanosine (m7G) cap, the NAD cap promotes mRNA decay. Preferentially acts on NAD-capped transcripts in response to nutrient stress. Also acts on free nicotinamide adenine dinucleotide molecules: hydrolyzes NAD(H) into NMN(H) and AMP, and NADPH into NMNH and 2',5'-ADP. May act to regulate the concentration of peroxisomal nicotinamide nucleotide cofactors required for oxidative metabolism in this organelle. Regulates the levels of circadian clock components PER1, PER2, PER3 and CRY2 in the liver. This chain is NAD-capped RNA hydrolase NUDT12, found in Pongo abelii (Sumatran orangutan).